The following is a 379-amino-acid chain: Alanine racemase (379 aa).

The active-site Proton acceptor; specific for D-alanine is the K37. At K37 the chain carries N6-(pyridoxal phosphate)lysine. R137 contributes to the substrate binding site. Y269 acts as the Proton acceptor; specific for L-alanine in catalysis. M317 serves as a coordination point for substrate.

Belongs to the alanine racemase family. The cofactor is pyridoxal 5'-phosphate.

It carries out the reaction L-alanine = D-alanine. It functions in the pathway amino-acid biosynthesis; D-alanine biosynthesis; D-alanine from L-alanine: step 1/1. Its function is as follows. Catalyzes the interconversion of L-alanine and D-alanine. May also act on other amino acids. This is Alanine racemase (alr) from Citrifermentans bemidjiense (strain ATCC BAA-1014 / DSM 16622 / JCM 12645 / Bem) (Geobacter bemidjiensis).